The primary structure comprises 809 residues: Transitional endoplasmic reticulum ATPase homolog 1 (809 aa).

The tract at residues 1–21 is disordered; the sequence is MASVPTHQSEKEKKNDELSTA. Positions 8-21 are enriched in basic and acidic residues; sequence QSEKEKKNDELSTA. ATP-binding positions include 253-259, asparagine 354, histidine 390, and 527-532; these read PGTGKTL and GCGKTL. Residues 779–809 form a disordered region; the sequence is FGNNFKFPGEQRGSDAPSAPVPAQDDDDLYN. The segment at 803-809 is interaction with ufd-2; sequence DDDDLYN.

Belongs to the AAA ATPase family. CDC48 subfamily. In terms of assembly, homohexamer; oligomerization is ATP-independent. Forms a ring-shaped particle of 18.3 nm diameter, that displays 6-fold radial symmetry. Interacts with cdc-48.2 and thus may form heterohexamers. Forms a complex composed of cdc-48.1, him-6 and crp-1; within the complex, interacts with helicase him-6 and GTPase crp-1. Forms a complex composed of deubiquitinating enzyme atx-3, adapter ubxn-5 and cdc-48.1; within the complex, interacts (via N-terminus) with ubxn-5 and with atx-3. Forms a complex composed of deubiquitinating enzyme atx-3, E4 ubiquitin-protein ligase ufd-2 and cdc-48.1; within the complex, interacts with atx-3 and (via DDDLYN motif) with ufd-2. Interacts (via N-terminus) with atx-3 (via RRDR motif); the interaction is not required for atx-3 enzymatic activity. Forms a complex composed of cdc-48.1, myosin chaperone unc-45, ubiquitin-protein ligases ufd-2 and chn-1; within the complex, interacts (via DDDLYN motif) with ufd-2 and targets myosin chaperone unc-45 for proteasomal degradation. Forms a complex composed of ubxn-3, ufd-1, npl-4.1 and cdc-48.1; within the complex, interacts (via N-terminus) with ubxn-3 (via FPK motif) and with ufd-1. Forms a complex composed of ubxn-3, cdc-48.1 and/or cdc-48.2 and substrate cdt-1. Interacts (via N-terminus) with ubxn-1. Interacts (via N-terminus) with ubxn-2. Interacts (via N-terminus) with ubxn-4. Interacts with ubxn-6. Interacts with ufd-3. Does not interact with air-2. Expressed in germ cells and spermatheca. Expressed in body wall muscles.

The protein resides in the cytoplasm. The protein localises to the perinuclear region. It carries out the reaction ATP + H2O = ADP + phosphate + H(+). The first ATP-binding region has low ATPase activity. The second ATP-binding region is responsible for ATPase activity. ATP binding to the first ATP-binding region induces intrinsic activity of the second ATP-binding region. While ATP binding to the first ATP-binding region appears to prevent ATP hydrolysis by the second ATP-binding region, ADP-binding to first region promotes the coordinate and cooperative ATPase cycle of the second ATP-binding region. ATP binding to the first ATP-binding region induces a conformational change, promoting the rotation of the first ATP-binding region relative to the second ATP-binding region in the hexamer. Inhibited by N-ethylmaleimide (NEM). In terms of biological role, ATP-dependent chaperone which probably uses the energy provided by ATP hydrolysis to generate mechanical force to unfold substrate proteins, disassemble protein complexes, and disaggregate protein aggregates. Can also prevent aggregation of unfolded proteins also in an ATP-independent manner. Targets polyubiquitinated proteins for proteasomal degradation by binding to 'Lys-48'-linked polyubiquitin chains. Involved in the cytoplasmic elimination of misfolded proteins exported from the ER. This pathway, known as ERAD, prevents the activation of the unfolded protein response (UPR) caused by the accumulation of misfolded proteins in the ER. In association with helicase him-6 and GTPase crp-1, regulates the unfolded protein response (UPR) following ER stress, probably independently of the ERAD pathway. Together with udf-2 and chn-1, regulates myosin assembly in body wall muscles by targeting myosin chaperone unc-45 for proteasomal degradation. Together with the ufd-1-npl-4 complex, controls the switch from spermatogenesis to oogenesis by regulating E3 ligase cul-2 complex-mediated tra-1 proteasomal degradation. During oocyte meiosis and together with cdc-48.2, required for chromosome condensation at the diakinesis phase in prophase I and for progression of metaphase I. During the first embryonic cell division, regulates DNA replication and thus chromosome segregation and decondensation, and nuclear envelope re-assembly. In S phase and in association with ufd-1, npl-4.1 and/or npl-4.2 and ubxn-3, ensures the degradation of DNA licensing factor cdt-1 after the initiation of DNA replication and thus the disassembly of the DNA replication CMG helicase complex by promoting the dissociation from chromatin of several of its components including cdc-45 and sld-5. Regulates ubxn-3 nuclear localization during S phase. During the first embryonic cell divisions and together with cdc-48.2, regulates the re-assembly of the nuclear envelope after mitosis possibly by inactivating kinase air-2, a component of the chromosomal passenger complex (CPC). However, in another study, cdc-48.1 does not appear to be implicated in the regulation of air-2. This Caenorhabditis elegans protein is Transitional endoplasmic reticulum ATPase homolog 1.